A 189-amino-acid polypeptide reads, in one-letter code: Elongation factor P (189 aa).

This sequence belongs to the elongation factor P family.

The protein localises to the cytoplasm. Its pathway is protein biosynthesis; polypeptide chain elongation. In terms of biological role, involved in peptide bond synthesis. Stimulates efficient translation and peptide-bond synthesis on native or reconstituted 70S ribosomes in vitro. Probably functions indirectly by altering the affinity of the ribosome for aminoacyl-tRNA, thus increasing their reactivity as acceptors for peptidyl transferase. This Aster yellows witches'-broom phytoplasma (strain AYWB) protein is Elongation factor P.